We begin with the raw amino-acid sequence, 435 residues long: Glutamyl-tRNA reductase (435 aa).

Substrate is bound by residues 50–53, Ser110, 115–117, and Gln121; these read TCNR and ESQ. Cys51 (nucleophile) is an active-site residue. 191 to 196 is an NADP(+) binding site; that stretch reads GAGDMG.

Belongs to the glutamyl-tRNA reductase family. As to quaternary structure, homodimer.

It carries out the reaction (S)-4-amino-5-oxopentanoate + tRNA(Glu) + NADP(+) = L-glutamyl-tRNA(Glu) + NADPH + H(+). The protein operates within porphyrin-containing compound metabolism; protoporphyrin-IX biosynthesis; 5-aminolevulinate from L-glutamyl-tRNA(Glu): step 1/2. Catalyzes the NADPH-dependent reduction of glutamyl-tRNA(Glu) to glutamate 1-semialdehyde (GSA). In Sulfurovum sp. (strain NBC37-1), this protein is Glutamyl-tRNA reductase.